Reading from the N-terminus, the 354-residue chain is Rhodopsin (354 aa).

Over 1–36 (MNGTEGPNFYIPMSNKTGVVRSPFEYPQYYLAEPWK) the chain is Extracellular. N-linked (GlcNAc...) asparagine glycosylation is found at N2 and N15. Residues 37–61 (YSILAAYMFLLILLGFPINFMTLYV) traverse the membrane as a helical segment. The Cytoplasmic portion of the chain corresponds to 62–73 (TIQHKKLRTPLN). A helical membrane pass occupies residues 74 to 96 (YILLNLAFANHFMVLCGFTITLY). The Extracellular segment spans residues 97-110 (TSLHGYFVFGQSGC). C110 and C187 are disulfide-bonded. A helical transmembrane segment spans residues 111–133 (YFEGFFATLGGEIALWSLVALAI). The short motif at 134 to 136 (ERY) is the 'Ionic lock' involved in activated form stabilization element. The Cytoplasmic segment spans residues 134–152 (ERYIVVCKPMSNFRFGENH). A helical transmembrane segment spans residues 153–173 (AMMGVAFTWIMALACAVPPLF). Topologically, residues 174-202 (GWSRYIPEGMQCSCGVDYYTLKPEINNES) are extracellular. Residues 203–224 (FVIYMFVVHFLIPLIIITFCYG) traverse the membrane as a helical segment. At 225 to 252 (RLVCTVKEAAAQQQESATTQKAEKEVTR) the chain is on the cytoplasmic side. Residues 253 to 274 (MVIIMVIFFLICWVPYAYVAFY) traverse the membrane as a helical segment. Topologically, residues 275 to 286 (IFCNQGSEFGPI) are extracellular. A helical membrane pass occupies residues 287–308 (FMTVPAFFAKSSAIYNPVIYIM). K296 is subject to N6-(retinylidene)lysine. The Cytoplasmic portion of the chain corresponds to 309 to 354 (LNKQFRNCMITTLCCGKNPFGDDDASSAATSKTEATSVSTSQVSPA). S-palmitoyl cysteine attachment occurs at residues C322 and C323. Positions 332 to 354 (DASSAATSKTEATSVSTSQVSPA) are disordered. A compositionally biased stretch (low complexity) spans 334–354 (SSAATSKTEATSVSTSQVSPA).

It belongs to the G-protein coupled receptor 1 family. Opsin subfamily. In terms of processing, contains one covalently linked retinal chromophore. Upon light absorption, the covalently bound 11-cis-retinal is converted to all-trans-retinal. After hydrolysis of the Schiff base and release of the covalently bound all-trans-retinal, active rhodopsin is regenerated by binding of a fresh molecule of 11-cis-retinal.

It is found in the membrane. It localises to the cell projection. The protein resides in the cilium. The protein localises to the photoreceptor outer segment. Its function is as follows. Photoreceptor required for image-forming vision at low light intensity. Required for photoreceptor cell viability after birth. Light-induced isomerization of 11-cis to all-trans retinal triggers a conformational change that activates signaling via G-proteins. Subsequent receptor phosphorylation mediates displacement of the bound G-protein alpha subunit by arrestin and terminates signaling. The sequence is that of Rhodopsin (RHO) from Rana temporaria (European common frog).